Reading from the N-terminus, the 289-residue chain is ATP synthase gamma chain (289 aa).

It belongs to the ATPase gamma chain family. In terms of assembly, F-type ATPases have 2 components, CF(1) - the catalytic core - and CF(0) - the membrane proton channel. CF(1) has five subunits: alpha(3), beta(3), gamma(1), delta(1), epsilon(1). CF(0) has three main subunits: a, b and c.

The protein resides in the cell inner membrane. Functionally, produces ATP from ADP in the presence of a proton gradient across the membrane. The gamma chain is believed to be important in regulating ATPase activity and the flow of protons through the CF(0) complex. This Azobacteroides pseudotrichonymphae genomovar. CFP2 protein is ATP synthase gamma chain.